Here is a 300-residue protein sequence, read N- to C-terminus: Delta(7)-sterol 5(6)-desaturase erg31 (300 aa).

3 helical membrane passes run 33–53 (ISLF…FASL), 78–98 (VLTA…WFLA), and 117–137 (YFLC…YWAH). In terms of domain architecture, Fatty acid hydroxylase spans 123–248 (PLFVMFSDFG…FTTLFDRLGN (126 aa)). A Histidine box-1 motif is present at residues 137-141 (HRFLH). The short motif at 150-154 (HKLHH) is the Histidine box-2 element. Residues 180–200 (HLFPFFFPLHKLTYLALFTFV) traverse the membrane as a helical segment. A Histidine box-3 motif is present at residues 225–229 (HNGHH).

This sequence belongs to the sterol desaturase family. Fe cation serves as cofactor.

Its subcellular location is the endoplasmic reticulum membrane. The catalysed reaction is episterol + 2 Fe(II)-[cytochrome b5] + O2 + 2 H(+) = 5-dehydroepisterol + 2 Fe(III)-[cytochrome b5] + 2 H2O. It functions in the pathway steroid metabolism; ergosterol biosynthesis. Functionally, C-5 sterol desaturase; part of the third module of ergosterol biosynthesis pathway that includes by the late steps of the pathway. Erg31 and erg32 catalyze the introduction of a C-5 double bond in the B ring to produce 5-dehydroepisterol. The third module or late pathway involves the ergosterol synthesis itself through consecutive reactions that mainly occur in the endoplasmic reticulum (ER) membrane. Firstly, the squalene synthase erg9 catalyzes the condensation of 2 farnesyl pyrophosphate moieties to form squalene, which is the precursor of all steroids. Secondly, squalene is converted into lanosterol by the consecutive action of the squalene epoxidase erg1 and the lanosterol synthase erg7. The lanosterol 14-alpha-demethylase erg11/cyp1 catalyzes C14-demethylation of lanosterol to produce 4,4'-dimethyl cholesta-8,14,24-triene-3-beta-ol. In the next steps, a complex process involving various demethylation, reduction and desaturation reactions catalyzed by the C-14 reductase erg24 and the C-4 demethylation complex erg25-erg26-erg27 leads to the production of zymosterol. Erg28 likely functions in the C-4 demethylation complex reaction by tethering erg26 and Erg27 to the endoplasmic reticulum or to facilitate interaction between these proteins. Then, the sterol 24-C-methyltransferase erg6 catalyzes the methyl transfer from S-adenosyl-methionine to the C-24 of zymosterol to form fecosterol. The C-8 sterol isomerase erg2 catalyzes the reaction which results in unsaturation at C-7 in the B ring of sterols and thus converts fecosterol to episterol. The sterol-C5-desaturases erg31 and erg32 then catalyze the introduction of a C-5 double bond in the B ring to produce 5-dehydroepisterol. The C-22 sterol desaturase erg5 further converts 5-dehydroepisterol into ergosta-5,7,22,24(28)-tetraen-3beta-ol by forming the C-22(23) double bond in the sterol side chain. Finally, ergosta-5,7,22,24(28)-tetraen-3beta-ol is substrate of the C-24(28) sterol reductase erg4 to produce ergosterol. In the genus Schizosaccharomyces, a second route exists between lanosterol and fecosterol, via the methylation of lanosterol to eburicol by erg6, followed by C14-demethylation by erg11/cyp1 and C4-demethylation by the demethylation complex erg25-erg26-erg27. The protein is Delta(7)-sterol 5(6)-desaturase erg31 of Schizosaccharomyces pombe (strain 972 / ATCC 24843) (Fission yeast).